Here is a 517-residue protein sequence, read N- to C-terminus: Maturase K (517 aa).

Belongs to the intron maturase 2 family. MatK subfamily.

Its subcellular location is the plastid. The protein localises to the chloroplast. In terms of biological role, usually encoded in the trnK tRNA gene intron. Probably assists in splicing its own and other chloroplast group II introns. The protein is Maturase K of Acer pseudoplatanus (Sycamore maple).